The chain runs to 540 residues: Thiamine biosynthetic bifunctional enzyme (540 aa).

The tract at residues 1-238 (MVFTKEEVDY…LDATRYQFVE (238 aa)) is thiamine-phosphate synthase. 4-amino-2-methyl-5-(diphosphooxymethyl)pyrimidine-binding positions include 43-47 (QIREK) and asparagine 75. Residues aspartate 76 and aspartate 95 each coordinate Mg(2+). Serine 114 is a binding site for 4-amino-2-methyl-5-(diphosphooxymethyl)pyrimidine. 2-[(2R,5Z)-2-carboxy-4-methylthiazol-5(2H)-ylidene]ethyl phosphate is bound at residue 143–145 (TST). Residue lysine 146 participates in 4-amino-2-methyl-5-(diphosphooxymethyl)pyrimidine binding. Residues glycine 181 and 209–210 (VS) each bind 2-[(2R,5Z)-2-carboxy-4-methylthiazol-5(2H)-ylidene]ethyl phosphate. The interval 239–540 (CELNNTFPTT…KWSASLKKFK (302 aa)) is hydroxyethylthiazole kinase. Methionine 290 serves as a coordination point for 5-(2-hydroxyethyl)-4-methylthiazole. Residues lysine 365 and threonine 415 each contribute to the ATP site. Alanine 462 is a 5-(2-hydroxyethyl)-4-methylthiazole binding site. Catalysis depends on cysteine 465, which acts as the Proton acceptor; for hydroxyethylthiazole kinase activity.

It in the N-terminal section; belongs to the thiamine-phosphate synthase family. In the C-terminal section; belongs to the Thz kinase family. As to quaternary structure, homooctamer. Mg(2+) is required as a cofactor.

The enzyme catalyses 2-[(2R,5Z)-2-carboxy-4-methylthiazol-5(2H)-ylidene]ethyl phosphate + 4-amino-2-methyl-5-(diphosphooxymethyl)pyrimidine + 2 H(+) = thiamine phosphate + CO2 + diphosphate. It carries out the reaction 2-(2-carboxy-4-methylthiazol-5-yl)ethyl phosphate + 4-amino-2-methyl-5-(diphosphooxymethyl)pyrimidine + 2 H(+) = thiamine phosphate + CO2 + diphosphate. The catalysed reaction is 4-methyl-5-(2-phosphooxyethyl)-thiazole + 4-amino-2-methyl-5-(diphosphooxymethyl)pyrimidine + H(+) = thiamine phosphate + diphosphate. It catalyses the reaction 5-(2-hydroxyethyl)-4-methylthiazole + ATP = 4-methyl-5-(2-phosphooxyethyl)-thiazole + ADP + H(+). The protein operates within cofactor biosynthesis; thiamine diphosphate biosynthesis; 4-methyl-5-(2-phosphoethyl)-thiazole from 5-(2-hydroxyethyl)-4-methylthiazole: step 1/1. Its pathway is cofactor biosynthesis; thiamine diphosphate biosynthesis; thiamine phosphate from 4-amino-2-methyl-5-diphosphomethylpyrimidine and 4-methyl-5-(2-phosphoethyl)-thiazole: step 1/1. In terms of biological role, essential for thiamine biosynthesis. The kinase activity is involved in the salvage synthesis of TH-P from the thiazole. Functionally, condenses 4-methyl-5-(beta-hydroxyethyl)thiazole monophosphate (THZ-P) and 2-methyl-4-amino-5-hydroxymethyl pyrimidine pyrophosphate (HMP-PP) to form thiamine monophosphate (TMP). This is Thiamine biosynthetic bifunctional enzyme (THI6) from Saccharomyces cerevisiae (strain ATCC 204508 / S288c) (Baker's yeast).